A 501-amino-acid chain; its full sequence is L-aspartate decarboxylase dtxS4 (501 aa).

106–108 (KLT) serves as a coordination point for substrate. Lysine 320 carries the post-translational modification N6-(pyridoxal phosphate)lysine. Arginine 474 is a substrate binding site.

Belongs to the group II decarboxylase family. Pyridoxal 5'-phosphate serves as cofactor.

It carries out the reaction L-aspartate + H(+) = beta-alanine + CO2. The protein operates within secondary metabolite biosynthesis. In terms of biological role, L-aspartate decarboxylase; part of the gene cluster that mediates the biosynthesis of destruxins, insecticidal cyclic hexadepsipeptides which induce flaccid paralysis and visceral muscle contraction in insects through targeting the calcium channels and vacuolar-type ATPases. The aldo-keto reductase dtxS3 converts alpha-ketoisocaproic acid from deaminated leucine into alpha-hydroxyisocaproic acid (HIC), which is the first substrate for destruxin assembly by dtxS1. L-aspartate decarboxylase dtxS4 converts aspartic acid into beta-alanine, the last substrate for the destruxin assembly line performed by dtxS1. The nonribosomal peptide synthetase dtxS1 synthesizes destruxins B and B2, whereas the cytochrome P450 monooxygenase dtxS2 is required to convert destruxin B into other destruxin derivatives, including destructins C, D, A and E. Destruxin E-diol (ED) is further produced in a non-enzymatic manner from destruxin E. Destruxins play an important role in virulence and escape from insect host immune defenses. The sequence is that of L-aspartate decarboxylase dtxS4 from Metarhizium robertsii (strain ARSEF 23 / ATCC MYA-3075) (Metarhizium anisopliae (strain ARSEF 23)).